We begin with the raw amino-acid sequence, 575 residues long: CCR4-NOT transcription complex subunit 4 (575 aa).

The RING-type; degenerate zinc-finger motif lies at 14–57 (CPLCMEPLEIDDINFFPCTCGYQICRFCWHRIRTDENGLCPACR). Residues 68–104 (KPLSQEELQRIKNEKKQKQNERKQKISENRKHLASVR) are a coiled coil. Serine 71 is subject to Phosphoserine. One can recognise an RRM domain in the interval 109 to 189 (NLVFVVGLSQ…VVDGRTLKAS (81 aa)). Residues 190 to 217 (LGTTKYCSYFLKNMQCPKPDCMYLHELG) form a C3H1-type zinc finger. Disordered regions lie at residues 256–372 (TGSV…EPQS) and 424–458 (SVQD…HPAA). The span at 281-299 (DSLSIGNGDNSQQISNSDT) shows a compositional bias: polar residues. The residue at position 301 (serine 301) is a Phosphoserine. A compositionally biased stretch (polar residues) spans 307-322 (SKSNPVIPISSSNHSA). A Phosphoserine modification is found at serine 324. Pro residues predominate over residues 345–356 (NPIPSGLPPFPS). Over residues 428–441 (QPSLSPTSLQNSSS) the composition is skewed to low complexity. Position 432 is a phosphoserine (serine 432). 2 positions are modified to asymmetric dimethylarginine: arginine 475 and arginine 483. Serine 490 is modified (phosphoserine). Asymmetric dimethylarginine is present on arginine 497. Positions 553–575 (PLSTSSHSLQQGQQPTSLHTTVA) are disordered.

In terms of assembly, interacts with CNOT1 via its C-terminus but does not stably associate with the CCR4-NOT complex. Interacts (via RING domain) with UBE2D2. Interacts with ABCE1, PINK1 and PELO. Autoubiquitinated.

It is found in the cytoplasm. The protein resides in the nucleus. The catalysed reaction is S-ubiquitinyl-[E2 ubiquitin-conjugating enzyme]-L-cysteine + [acceptor protein]-L-lysine = [E2 ubiquitin-conjugating enzyme]-L-cysteine + N(6)-ubiquitinyl-[acceptor protein]-L-lysine.. It functions in the pathway protein modification; protein ubiquitination. Functionally, has E3 ubiquitin ligase activity, promoting ubiquitination and degradation of target proteins. Involved in activation of the JAK/STAT pathway. Catalyzes ubiquitination of methylated RBM15. Plays a role in quality control of translation of mitochondrial outer membrane-localized mRNA. As part of the PINK1-regulated signaling, upon mitochondria damage, ubiquitinates ABCE1 and thereby recruits autophagy receptors to the mitochondrial outer membrane to initiate mitophagy. The chain is CCR4-NOT transcription complex subunit 4 (CNOT4) from Homo sapiens (Human).